A 1249-amino-acid chain; its full sequence is Myosin-1 (1249 aa).

The disordered stretch occupies residues 1–40 (MGHSRRPAGGEKKSRFGRSKAAADVGDGRQAGGKPQVRKA). The region spanning 50–729 (IGVSDLTLLS…TLFALEAMRD (680 aa)) is the Myosin motor domain. 143–150 (GESGAGKT) is an ATP binding site. Ser-371 bears the Phosphoserine mark. The tract at residues 418–500 (SIGILDIYGF…PGVFAALNDA (83 aa)) is actin-binding. 2 IQ domains span residues 733-753 (HNMA…RTEC) and 754-779 (AIRI…QGHT). The 193-residue stretch at 787–979 (RRRMSILGSR…PGEPPNSVSK (193 aa)) folds into the TH1 domain. Disordered stretches follow at residues 959-1081 (DSYK…KAKA) and 1127-1249 (EAYL…DDDW). Low complexity-rich tracts occupy residues 1026–1035 (PQTAAAQPTP) and 1043–1061 (PVAA…ASAR). Pro residues predominate over residues 1062–1073 (APPPPPPAPPAA). Residues 1074 to 1135 (AGPKKAKALY…PEAYLEEQVA (62 aa)) form the SH3 domain. Over residues 1137–1149 (TPKPAPPPPPPVA) the composition is skewed to pro residues. Residues 1150–1170 (PRASPAPVNGSAAVAAAKAKA) show a composition bias toward low complexity. Polar residues predominate over residues 1199-1221 (VSMNSQGDSSGASGRGTPSSVSN). The segment covering 1222–1235 (ASLAGGLAEALRAR) has biased composition (low complexity).

The protein belongs to the TRAFAC class myosin-kinesin ATPase superfamily. Myosin family. Interacts (via IQ domains) with camA. Phosphorylation of the TEDS site (Ser-371) is required for the polarization of the actin cytoskeleton. Phosphorylation probably activates the myosin-I ATPase activity.

Its subcellular location is the cytoplasm. The protein localises to the cytoskeleton. It is found in the actin patch. Type-I myosin implicated in the organization of the actin cytoskeleton. Required for proper actin cytoskeleton polarization. At the cell cortex, assembles in patch-like structures together with proteins from the actin-polymerizing machinery and promotes actin assembly. Functions as actin nucleation-promoting factor (NPF) for the Arp2/3 complex. Plays an important role in polarized growth, spore germination, hyphal morphogenesis, and septal wall formation. This chain is Myosin-1 (myoA), found in Emericella nidulans (strain FGSC A4 / ATCC 38163 / CBS 112.46 / NRRL 194 / M139) (Aspergillus nidulans).